Consider the following 93-residue polypeptide: Bombyxin B-11 (93 aa).

A signal peptide spans Met-1 to Glu-22. Cystine bridges form between Cys-30–Cys-75, Cys-42–Cys-92, and Cys-74–Cys-79. A propeptide spans Gly-49–Ser-64 (bombyxin B-11 C peptide).

This sequence belongs to the insulin family. As to quaternary structure, heterodimer of a B chain and an A chain linked by two disulfide bonds.

Its subcellular location is the secreted. Its function is as follows. Brain peptide responsible for activation of prothoracic glands to produce ecdysone in insects. The sequence is that of Bombyxin B-11 (BBXB11) from Bombyx mori (Silk moth).